The primary structure comprises 115 residues: MARAAASQLVLVALVAAMLLVAADAAISCGQVSSALSPCISYARGNGAKPPAACCSGVKRLAGAAQSTADKQAACKCIKSAAGGLNAGKAAGIPSMCGVSVPYAISASVDCSKIR.

An N-terminal signal peptide occupies residues 1 to 25 (MARAAASQLVLVALVAAMLLVAADA). Intrachain disulfides connect Cys29-Cys77, Cys39-Cys54, Cys55-Cys97, and Cys75-Cys111.

Belongs to the plant LTP family.

Its function is as follows. Plant non-specific lipid-transfer proteins transfer phospholipids as well as galactolipids across membranes. May play a role in wax or cutin deposition in the cell walls of expanding epidermal cells and certain secretory tissues. In Hordeum vulgare (Barley), this protein is Non-specific lipid-transfer protein 4.1 (LTP4.1).